Reading from the N-terminus, the 273-residue chain is Oxidized low-density lipoprotein receptor 1 (273 aa).

Residues 1 to 22 (MTFDDLKIQTVKDQPDEKSNGK) are disordered. Topologically, residues 1 to 36 (MTFDDLKIQTVKDQPDEKSNGKKAKGLQFLYSPWWC) are cytoplasmic. Residues Cys36 and Cys46 are each lipidated (S-palmitoyl cysteine). A helical; Signal-anchor for type II membrane protein membrane pass occupies residues 37–57 (LAAATLGVLCLGLVVTIMVLG). Positions 58–150 (MQLSQVSDLL…SAPCPQDWIW (93 aa)) are neck. At 58 to 273 (MQLSQVSDLL…CQKKANLRAQ (216 aa)) the chain is on the extracellular side. Positions 64–123 (SDLLTQEQANLTHQKKKLEGQISARQQAEEASQESENELKEMIETLARKLNEKSKEQMEL) form a coiled coil. Asn73 carries an N-linked (GlcNAc...) asparagine glycan. N-linked (GlcNAc...) (complex) asparagine glycosylation is present at Asn139. Disulfide bonds link Cys144-Cys155, Cys172-Cys264, and Cys243-Cys256. In terms of domain architecture, C-type lectin spans 151-265 (HGENCYLFSS…CILAAFSICQ (115 aa)).

Homodimer; disulfide-linked. May form a hexamer composed of 3 homodimers. Interacts with HSP70. In terms of assembly, (Microbial infection) Binds to the head and beginning of the coiled stalk of N.meningitidis adhesin A (nadA) variant 3; binding can be abrogated by monoclonal antibodies against the specific regions of NadA. Binding occurs in protein microarrays, in solution and when LOX-1 is expressed on the cell surface. In terms of processing, the intrachain disulfide-bonds prevent N-glycosylation at some sites. Post-translationally, N-glycosylated. In terms of tissue distribution, expressed at high level in endothelial cells and vascular-rich organs such as placenta, lung, liver and brain, aortic intima, bone marrow, spinal cord and substantia nigra. Also expressed at the surface of dendritic cells. Widely expressed at intermediate and low level.

The protein localises to the cell membrane. Its subcellular location is the membrane raft. The protein resides in the secreted. Receptor that mediates the recognition, internalization and degradation of oxidatively modified low density lipoprotein (oxLDL) by vascular endothelial cells. OxLDL is a marker of atherosclerosis that induces vascular endothelial cell activation and dysfunction, resulting in pro-inflammatory responses, pro-oxidative conditions and apoptosis. Its association with oxLDL induces the activation of NF-kappa-B through an increased production of intracellular reactive oxygen and a variety of pro-atherogenic cellular responses including a reduction of nitric oxide (NO) release, monocyte adhesion and apoptosis. In addition to binding oxLDL, it acts as a receptor for the HSP70 protein involved in antigen cross-presentation to naive T-cells in dendritic cells, thereby participating in cell-mediated antigen cross-presentation. Also involved in inflammatory process, by acting as a leukocyte-adhesion molecule at the vascular interface in endotoxin-induced inflammation. Also acts as a receptor for advanced glycation end (AGE) products, activated platelets, monocytes, apoptotic cells and both Gram-negative and Gram-positive bacteria. Its function is as follows. (Microbial infection) May serve as a receptor for adhesin A variant 3 (nadA) of N.meningitidis. This chain is Oxidized low-density lipoprotein receptor 1 (OLR1), found in Homo sapiens (Human).